Reading from the N-terminus, the 415-residue chain is Thyroxine-binding globulin (415 aa).

Positions 1–20 are cleaved as a signal peptide; sequence MSPFLYLVLLVLGLHATIHC. Residue Asn36 is glycosylated (N-linked (GlcNAc...) (complex) asparagine). Asn99 carries an N-linked (GlcNAc...) asparagine glycan. Ile116 carries N-linked (GlcNAc...) asparagine; in variant Gary glycosylation. 2 N-linked (GlcNAc...) asparagine glycosylation sites follow: Asn165 and Asn253. Thyroxine is bound by residues Asn293 and Arg398.

It belongs to the serpin family. In terms of tissue distribution, expressed by the liver and secreted in plasma.

The protein localises to the secreted. Functionally, major thyroid hormone transport protein in serum. The polypeptide is Thyroxine-binding globulin (SERPINA7) (Homo sapiens (Human)).